The primary structure comprises 360 residues: MSIRSNFVRLLKKQVSIIKLQKKCSHSVAVIGAPFSKGQKRRGVEHGPAAIRSAGLIERLSNLGCNVCDFGDLHFSQVPNDELYNSIVKHPRTVGLACKVLAEEVSKAVGAGHTCVTLGGDHSLAFGSITGHAQQCPDLCVIWVDAHADINTPLTTPSGNLHGQPVSFLLRELQDKVPPIPGFSWAKPCLSKSDIVYIGLRDLDPAEQFILKNYDISYYSMRHIDCMGIKKVMEKTFDQLLGRRDRPIHLSFDIDAFDPALAPATGTPVIGGLTYREGVYITEEIHNTGMLSAVDLVEVNPVLAATSEEVKATANLAVDVIASCFGQTREGAHTRADTIIDVLPTPSTSYESDNEEQVRI.

Histidine 122, aspartate 145, histidine 147, and aspartate 149 together coordinate Mn(2+). Substrate-binding positions include 147-151 (HADIN), 158-160 (SGN), and aspartate 204. The Mn(2+) site is built by aspartate 253 and aspartate 255. Positions 267 and 298 each coordinate substrate.

Belongs to the arginase family. As to quaternary structure, homotrimer. It depends on Mn(2+) as a cofactor. In terms of tissue distribution, expressed at differing tadpole stages in tail, intestine, hindlimb and trunk region. Most abundant in tadpole tail.

The catalysed reaction is L-arginine + H2O = urea + L-ornithine. It functions in the pathway nitrogen metabolism; urea cycle; L-ornithine and urea from L-arginine: step 1/1. Its function is as follows. As well as its role in the urea cycle, may be involved in tissue remodeling. The protein is Arginase, non-hepatic 1 (arg2-a) of Xenopus laevis (African clawed frog).